The chain runs to 223 residues: Ribonuclease T (223 aa).

The Exonuclease domain maps to 20–194 (VVIDVETAGF…YDTERTAELF (175 aa)). Asp23, Glu25, His181, and Asp186 together coordinate Mg(2+). His181 (proton donor/acceptor) is an active-site residue.

Belongs to the RNase T family. In terms of assembly, homodimer. It depends on Mg(2+) as a cofactor.

Trims short 3' overhangs of a variety of RNA species, leaving a one or two nucleotide 3' overhang. Responsible for the end-turnover of tRNA: specifically removes the terminal AMP residue from uncharged tRNA (tRNA-C-C-A). Also appears to be involved in tRNA biosynthesis. This Shewanella baltica (strain OS185) protein is Ribonuclease T.